Here is a 785-residue protein sequence, read N- to C-terminus: Endonuclease MutS2 (785 aa).

An ATP-binding site is contributed by 332–339 (GPNTGGKT). Positions 710-785 (IDLRGLDAEE…GDGATIVELK (76 aa)) constitute a Smr domain.

It belongs to the DNA mismatch repair MutS family. MutS2 subfamily. Homodimer. Binds to stalled ribosomes, contacting rRNA.

Endonuclease that is involved in the suppression of homologous recombination and thus may have a key role in the control of bacterial genetic diversity. In terms of biological role, acts as a ribosome collision sensor, splitting the ribosome into its 2 subunits. Detects stalled/collided 70S ribosomes which it binds and splits by an ATP-hydrolysis driven conformational change. Acts upstream of the ribosome quality control system (RQC), a ribosome-associated complex that mediates the extraction of incompletely synthesized nascent chains from stalled ribosomes and their subsequent degradation. Probably generates substrates for RQC. The polypeptide is Endonuclease MutS2 (Clostridium botulinum (strain Alaska E43 / Type E3)).